The chain runs to 296 residues: ATP phosphoribosyltransferase (296 aa).

This sequence belongs to the ATP phosphoribosyltransferase family. Long subfamily. Mg(2+) is required as a cofactor.

The protein localises to the cytoplasm. It catalyses the reaction 1-(5-phospho-beta-D-ribosyl)-ATP + diphosphate = 5-phospho-alpha-D-ribose 1-diphosphate + ATP. It participates in amino-acid biosynthesis; L-histidine biosynthesis; L-histidine from 5-phospho-alpha-D-ribose 1-diphosphate: step 1/9. Its activity is regulated as follows. Feedback inhibited by histidine. Functionally, catalyzes the condensation of ATP and 5-phosphoribose 1-diphosphate to form N'-(5'-phosphoribosyl)-ATP (PR-ATP). Has a crucial role in the pathway because the rate of histidine biosynthesis seems to be controlled primarily by regulation of HisG enzymatic activity. The sequence is that of ATP phosphoribosyltransferase from Halorubrum lacusprofundi (strain ATCC 49239 / DSM 5036 / JCM 8891 / ACAM 34).